Here is a 237-residue protein sequence, read N- to C-terminus: Increased recombination centers protein 6 (237 aa).

This sequence belongs to the IRC6 family.

In terms of biological role, involved in gross chromosomal rearrangements (GCRs) and telomere healing. This is Increased recombination centers protein 6 (IRC6) from Saccharomyces cerevisiae (strain ATCC 204508 / S288c) (Baker's yeast).